Reading from the N-terminus, the 539-residue chain is Protoporphyrinogen oxidase (539 aa).

FAD contacts are provided by residues 18 to 23 (GGGVSG), 43 to 44 (ES), Trp-51, 70 to 73 (GPRT), Val-300, and 521 to 523 (PGV).

The protein belongs to the protoporphyrinogen/coproporphyrinogen oxidase family. Protoporphyrinogen oxidase subfamily. Requires FAD as cofactor.

The protein resides in the mitochondrion inner membrane. It catalyses the reaction protoporphyrinogen IX + 3 O2 = protoporphyrin IX + 3 H2O2. Its pathway is porphyrin-containing compound metabolism; protoporphyrin-IX biosynthesis; protoporphyrin-IX from protoporphyrinogen-IX: step 1/1. Its function is as follows. Catalyzes the 6-electron oxidation of protoporphyrinogen-IX to form protoporphyrin-IX. The chain is Protoporphyrinogen oxidase from Saccharomyces cerevisiae (strain ATCC 204508 / S288c) (Baker's yeast).